Reading from the N-terminus, the 136-residue chain is Urease subunit beta (136 aa).

Residues 113 to 136 form a disordered region; it reads NDEYAGVFGDNGAENVNKKGGKRS.

It belongs to the urease beta subunit family. In terms of assembly, heterotrimer of UreA (gamma), UreB (beta) and UreC (alpha) subunits. Three heterotrimers associate to form the active enzyme.

Its subcellular location is the cytoplasm. The enzyme catalyses urea + 2 H2O + H(+) = hydrogencarbonate + 2 NH4(+). It participates in nitrogen metabolism; urea degradation; CO(2) and NH(3) from urea (urease route): step 1/1. The protein is Urease subunit beta of Staphylococcus aureus (strain USA300).